A 434-amino-acid chain; its full sequence is Monodehydroascorbate reductase 1, peroxisomal (434 aa).

Residues 13-16, Glu40, Arg47, Lys52, Ile95, and 146-147 contribute to the FAD site; these read GGVS and RE. NAD(+) contacts are provided by residues 171 to 177, Glu195, Arg201, and Gly260; that span reads GGYIGLE. NADP(+) is bound at residue 173–177; it reads YIGLE. 2 residues coordinate NADP(+): Arg201 and Gly260. Asp297 provides a ligand contact to FAD. 313-314 provides a ligand contact to NAD(+); that stretch reads EH. Residue 313–314 participates in NADP(+) binding; the sequence is EH. Residue Val315 coordinates FAD. Residue Arg319 participates in L-ascorbate binding. FAD is bound at residue Tyr348. Tyr348 is an NAD(+) binding site. Residue Tyr348 participates in NADP(+) binding. Arg350 serves as a coordination point for L-ascorbate. Position 416 is a phosphoserine (Ser416).

This sequence belongs to the FAD-dependent oxidoreductase family. The cofactor is FAD.

The protein localises to the peroxisome matrix. It carries out the reaction 2 monodehydro-L-ascorbate radical + NADH + H(+) = 2 L-ascorbate + NAD(+). Catalyzes the conversion of monodehydroascorbate to ascorbate, oxidizing NADH in the process. This Arabidopsis thaliana (Mouse-ear cress) protein is Monodehydroascorbate reductase 1, peroxisomal.